Consider the following 200-residue polypeptide: Superoxide dismutase [Mn] (200 aa).

Residues H27, H77, D160, and H164 each contribute to the Mn(2+) site.

Belongs to the iron/manganese superoxide dismutase family. In terms of assembly, homodimer. Mn(2+) is required as a cofactor.

The enzyme catalyses 2 superoxide + 2 H(+) = H2O2 + O2. Functionally, destroys superoxide anion radicals which are normally produced within the cells and which are toxic to biological systems. This is Superoxide dismutase [Mn] (sodB) from Rhizobium meliloti (strain 1021) (Ensifer meliloti).